A 385-amino-acid chain; its full sequence is uncharacterized protein (385 aa).

Belongs to the mycobacterial PPE family.

This is an uncharacterized protein from Mycobacterium tuberculosis (strain CDC 1551 / Oshkosh).